Consider the following 663-residue polypeptide: Polyunsaturated fatty acid lipoxygenase ALOX15 (663 aa).

The 114-residue stretch at 2 to 115 (GLYRVRVSTG…ILSLPEGTAR (114 aa)) folds into the PLAT domain. A Lipoxygenase domain is found at 116 to 663 (TVVDDPQGLF…PSRVENSVAI (548 aa)). Fe cation-binding residues include histidine 361, histidine 366, histidine 541, histidine 545, and isoleucine 663.

This sequence belongs to the lipoxygenase family. Interacts with PEBP1; in response to IL13/interleukin-13, prevents the interaction of PEBP1 with RAF1 to activate the ERK signaling cascade. Requires Fe cation as cofactor.

The protein localises to the cytoplasm. Its subcellular location is the cytosol. It is found in the cell membrane. The protein resides in the lipid droplet. It catalyses the reaction (5Z,8Z,11Z,14Z)-eicosatetraenoate + O2 = (12S)-hydroperoxy-(5Z,8Z,10E,14Z)-eicosatetraenoate. It carries out the reaction (5Z,8Z,11Z,14Z)-eicosatetraenoate + O2 = (15S)-hydroperoxy-(5Z,8Z,11Z,13E)-eicosatetraenoate. The enzyme catalyses (9Z,12Z)-octadecadienoate + O2 = (13S)-hydroperoxy-(9Z,11E)-octadecadienoate. The catalysed reaction is (5Z,8Z,11Z,14Z)-eicosatetraenoate + 2 O2 = (14R,15S)-dihydroperoxy-(5Z,8Z,10E,12E)-eicosatetraenoate. It catalyses the reaction (5Z,8Z,11Z,14Z)-eicosatetraenoate + 2 O2 = (8S,15S)-dihydroperoxy-(5Z,9E,11Z,13E)-eicosatetraenoate. It carries out the reaction (14S,15R)-epoxy-(5Z,8Z,11Z)-eicosatrienoate + O2 = (8S)-hydroperoxy-(14S,15R)-epoxy-(5Z,9E,11Z)-eicosatrienoate. The enzyme catalyses (14S,15R)-epoxy-(5Z,8Z,11Z)-eicosatrienoate + O2 = (12S)-hydroperoxy-(14S,15R)-epoxy-(5Z,8Z,10E)-eicosatrienoate. The catalysed reaction is (14R,15S)-epoxy-(5Z,8Z,11Z)-eicosatrienoate + O2 = (5S)-hydroperoxy-(14R,15S)-epoxy-(6E,8Z,11Z)-eicosatrienoate. It catalyses the reaction (14R,15S)-epoxy-(5Z,8Z,11Z)-eicosatrienoate + O2 = (12S)-hydroperoxy-(14R,15S)-epoxy-(5Z,8Z,10E)-eicosatrienoate. It carries out the reaction (15R)-hydroperoxy-(5Z,8Z,11Z,13E)-eicosatetraenoate = 15-oxo-(5Z,8Z,11Z,13E)-eicosatetraenoate + H2O. The enzyme catalyses (15S)-hydroperoxy-(5Z,8Z,11Z,13E)-eicosatetraenoate = (14S,15S)-epoxy-(5Z,8Z,10E,12E)-eicosatetraenoate + H2O. The catalysed reaction is (12S)-hydroperoxy-(5Z,8Z,10E,14Z)-eicosatetraenoate = (8S)-hydroxy-(11S,12S)-epoxy-(5Z,9E,14Z)-eicosatrienoate. It catalyses the reaction (4Z,7Z,10Z,13Z,16Z,19Z)-docosahexaenoate + O2 = 14-hydroperoxy-(4Z,7Z,10Z,12E,16Z,19Z)-docosahexaenoate. It carries out the reaction (4Z,7Z,10Z,13Z,16Z)-docosapentaenoate + O2 = 14-hydroperoxy-(4Z,7Z,10Z,12E,16Z)-docosapentaenoate. The enzyme catalyses (7Z,10Z,13Z,16Z,19Z)-docosapentaenoate + O2 = 14-hydroperoxy-(7Z,10Z,12E,16Z,19Z)-docosapentaenoate. The catalysed reaction is (4Z,7Z,10Z,13Z,16Z,19Z)-docosahexaenoate + O2 = (14S)-hydroperoxy-(4Z,7Z,10Z,12E,16Z,19Z)-docosahexaenoate. It catalyses the reaction (4Z,7Z,10Z,13Z,16Z,19Z)-docosahexaenoate + O2 = (17S)-hydroperoxy-(4Z,7Z,10Z,13Z,15E,19Z)-docosahexaenoate. It carries out the reaction (7S)-hydroperoxy-(4Z,8E,10Z,13Z,16Z,19Z)-docosahexaenoate + O2 = (7S,14S)-dihydroperoxy-(4Z,8E,10Z,12E,16Z,19Z)-docosahexaenoate. The enzyme catalyses (7S)-hydroperoxy-(4Z,8E,10Z,13Z,16Z,19Z)-docosahexaenoate + O2 = (7S,17S)-dihydroperoxy-(4Z,8E,10Z,13Z,15E,19Z)-docosahexaenoate. The catalysed reaction is (4Z,7Z,10Z,13Z,16Z,19Z)-docosahexaenoate + O2 = (11S)-hydroperoxy-(4Z,7Z,9E,13Z,16Z,19Z)-docosahexaenoate. It catalyses the reaction N-(5Z,8Z,11Z,14Z)-eicosatetraenoyl-taurine + O2 = N-(12S)-hydroperoxy-(5Z,8Z,10E,14Z)-eicosatetraenoyl-taurine. It carries out the reaction N-(5Z,8Z,11Z,14Z)-eicosatetraenoyl-gamma-aminobutanoate + O2 = N-(12S)-hydroperoxy-(5Z,8Z,10E,14Z)-eicosatetraenoyl-gamma-aminobutanoate. The enzyme catalyses N-(5Z,8Z,11Z,14Z)-eicosatetraenoyl-glycine + O2 = N-(12S)-hydroperoxy-(5Z,8Z,10E,14Z)-eicosatetraenoyl-glycine. The catalysed reaction is N-(5Z,8Z,11Z,14Z)-eicosatetraenoyl-L-alanine + O2 = N-(12S)-hydroperoxy-(5Z,8Z,10E,14Z)-eicosatetraenoyl-alanine. It catalyses the reaction N-(5Z,8Z,11Z,14Z)-eicosatetraenoyl-taurine + O2 = N-(15S)-hydroperoxy-(5Z,8Z,11Z,13E)-eicosatetraenoyl-taurine. It carries out the reaction N-(5Z,8Z,11Z,14Z)-eicosatetraenoyl-gamma-aminobutanoate + O2 = N-(15S)-hydroperoxy-(5Z,8Z,11Z,13E)-eicosatetraenoyl-gamma-aminobutanoate. The enzyme catalyses N-(5Z,8Z,11Z,14Z)-eicosatetraenoyl-glycine + O2 = N-(15S)-hydroperoxy-(5Z,8Z,11Z,13E)-eicosatetraenoyl-glycine. The catalysed reaction is N-(5Z,8Z,11Z,14Z)-eicosatetraenoyl-L-alanine + O2 = N-(15S)-hydroperoxy-(5Z,8Z,11Z,13E)-eicosatetraenoyl-alanine. The protein operates within lipid metabolism; hydroperoxy eicosatetraenoic acid biosynthesis. In terms of biological role, non-heme iron-containing dioxygenase that catalyzes the stereo-specific peroxidation of free and esterified polyunsaturated fatty acids generating a spectrum of bioactive lipid mediators. It inserts peroxyl groups at C12 or C15 of arachidonate ((5Z,8Z,11Z,14Z)-eicosatetraenoate) producing both 12-hydroperoxyeicosatetraenoate/12-HPETE and 15-hydroperoxyeicosatetraenoate/15-HPETE. It may then act on 12-HPETE to produce hepoxilins, which may show pro-inflammatory properties. Can also peroxidize linoleate ((9Z,12Z)-octadecadienoate) to 13-hydroperoxyoctadecadienoate. May participate in the sequential oxidations of DHA ((4Z,7Z,10Z,13Z,16Z,19Z)-docosahexaenoate) to generate specialized pro-resolving mediators (SPMs)like resolvin D5 ((7S,17S)-diHPDHA) and (7S,14S)-diHPDHA, that actively down-regulate the immune response and have anti-aggregation properties with platelets. Can convert epoxy fatty acids to hydroperoxy-epoxides derivatives followed by an intramolecular nucleophilic substitution leading to the formation of monocyclic endoperoxides. Plays an important role during the maintenance of self-tolerance by peroxidizing membrane-bound phosphatidylethanolamine which can then signal the sorting process for clearance of apoptotic cells during inflammation and prevent an autoimmune response. In addition to its role in the immune and inflammatory responses, this enzyme may play a role in epithelial wound healing in the cornea through production of lipoxin A4 (LXA(4)) and docosahexaenoic acid-derived neuroprotectin D1 (NPD1; 10R,17S-HDHA), both lipid autacoids exhibit anti-inflammatory and neuroprotective properties. Furthermore, it may regulate actin polymerization which is crucial for several biological processes such as the phagocytosis of apoptotic cells. It is also implicated in the generation of endogenous ligands for peroxisome proliferator activated receptor (PPAR-gamma), hence modulating macrophage development and function. It may also exert a negative effect on skeletal development by regulating bone mass through this pathway. As well as participates in ER stress and downstream inflammation in adipocytes, pancreatic islets, and liver. Finally, it is also involved in the cellular response to IL13/interleukin-13. The chain is Polyunsaturated fatty acid lipoxygenase ALOX15 from Sus scrofa (Pig).